The chain runs to 1067 residues: Dorsal-ventral patterning protein tolloid (1067 aa).

An N-terminal signal peptide occupies residues 1 to 36; the sequence is MKGMRLMPMKMKAKLVVLSVGALWMMMFFLVDYAEG. Positions 37–136 are excised as a propeptide; that stretch reads RRLSQLPESE…NGQPIQRRRR (100 aa). Residues 136–338 enclose the Peptidase M12A domain; that stretch reads RAVTVRKERT…VQANLLYKCA (203 aa). Asn-176 is a glycosylation site (N-linked (GlcNAc...) asparagine). Cystine bridges form between Cys-179-Cys-337, Cys-201-Cys-223, Cys-203-Cys-204, Cys-340-Cys-390, and Cys-417-Cys-439. His-231 contributes to the Zn(2+) binding site. Glu-232 is an active-site residue. Residues His-235 and His-241 each coordinate Zn(2+). 2 short sequence motifs (cell attachment site) span residues 245–247 and 325–327; these read RGD. CUB domains are found at residues 340 to 477 and 478 to 591; these read CGRT…FEVV and CGGD…LMLD. The N-linked (GlcNAc...) asparagine glycan is linked to Asn-441. Cystine bridges form between Cys-478–Cys-505, Cys-532–Cys-554, Cys-595–Cys-606, Cys-602–Cys-615, Cys-617–Cys-630, and Cys-634–Cys-662. Asn-543 carries N-linked (GlcNAc...) asparagine glycosylation. The EGF-like 1; calcium-binding domain maps to 591 to 631; the sequence is DVDECKFTDHGCQHLCINTLGSYQCGCRAGYELQANGKTCE. The CUB 3 domain maps to 634–753; sequence CGGVVDATKS…SGFVAKFVID (120 aa). 2 N-linked (GlcNAc...) asparagine glycosylation sites follow: Asn-644 and Asn-677. 8 disulfides stabilise this stretch: Cys-693–Cys-716, Cys-757–Cys-768, Cys-764–Cys-777, Cys-779–Cys-792, Cys-797–Cys-823, Cys-850–Cys-872, Cys-910–Cys-940, and Cys-967–Cys-989. Residues 753–793 form the EGF-like 2; calcium-binding domain; sequence DVDECSMNNGGCQHRCRNTFGSYQCSCRNGYTLAENGHNCT. Asn-791 carries N-linked (GlcNAc...) asparagine glycosylation. CUB domains are found at residues 797 to 909 and 910 to 1026; these read CKFE…FVSE and CGGY…FMAV. N-linked (GlcNAc...) asparagine glycans are attached at residues Asn-864 and Asn-918.

Requires Zn(2+) as cofactor.

Metalloprotease which cleaves TGF-beta family ligands daw, Actbeta and myo in vitro. Cleavage of daw enhances its signaling activity. Cleaves dorsal-ventral patterning protein sog. Processes sog more efficiently than metalloprotease tld which also cleaves sog. Required for normal dorsal development. TLD may interact physically with DPP-C protein. In Drosophila melanogaster (Fruit fly), this protein is Dorsal-ventral patterning protein tolloid (tld).